The following is a 652-amino-acid chain: Iron-regulated outer membrane virulence protein (652 aa).

An N-terminal signal peptide occupies residues 1–25; that stretch reads MSRFNPSPVSLSVTLGLMFSASAFA. The TonB box motif lies at 33 to 40; that stretch reads ETMVVTAA. Residues 45 to 162 form the TBDR plug domain; sequence VIQNAPASIS…IGGVINIITR (118 aa). Residues 167–652 enclose the TBDR beta-barrel domain; sequence QWSGNVQLST…RYWLGLDIAF (486 aa). A TonB C-terminal box motif is present at residues 635–652; sequence YGYVEDGRRYWLGLDIAF.

It belongs to the TonB-dependent receptor family.

It localises to the cell outer membrane. In terms of biological role, involved in the initial step of iron uptake by binding ferric vibriobactin, an iron chelatin siderophore that allows V.cholerae to extract iron from the environment. The sequence is that of Iron-regulated outer membrane virulence protein (irgA) from Vibrio cholerae serotype O1 (strain ATCC 39541 / Classical Ogawa 395 / O395).